The sequence spans 333 residues: Fe-S cluster assembly protein dre2 (333 aa).

Positions 1 to 29 are disordered; that stretch reads MSPITLDLTSDFNPANTTGAGSSSSQPRT. Positions 7-28 are enriched in polar residues; the sequence is DLTSDFNPANTTGAGSSSSQPR. An N-terminal SAM-like domain region spans residues 23–158; the sequence is SSSQPRTLLV…KPDYAEEEAV (136 aa). Residues 159-225 form a linker region; that stretch reads PLRFGLKRKT…EDTLLTEADL (67 aa). [2Fe-2S] cluster is bound by residues cysteine 235, cysteine 246, cysteine 249, and cysteine 251. The tract at residues 235–251 is fe-S binding site A; it reads CQPKPGKKRRACKDCTC. The [4Fe-4S] cluster site is built by cysteine 296, cysteine 299, cysteine 307, and cysteine 310. 2 short sequence motifs (cx2C motif) span residues 296–299 and 307–310; these read CGSC and CAGC. The segment at 296 to 310 is fe-S binding site B; the sequence is CGSCALGDAFRCAGC.

Belongs to the anamorsin family. As to quaternary structure, monomer. Interacts with tah18. Interacts with mia40. Requires [2Fe-2S] cluster as cofactor. The cofactor is [4Fe-4S] cluster.

It is found in the cytoplasm. Its subcellular location is the mitochondrion intermembrane space. Functionally, component of the cytosolic iron-sulfur (Fe-S) protein assembly (CIA) machinery required for the maturation of extramitochondrial Fe-S proteins. Part of an electron transfer chain functioning in an early step of cytosolic Fe-S biogenesis, facilitating the de novo assembly of a [4Fe-4S] cluster on the scaffold complex cfd1-nbp35. Electrons are transferred to dre2 from NADPH via the FAD- and FMN-containing protein tah18. Tah18-dre2 are also required for the assembly of the diferric tyrosyl radical cofactor of ribonucleotide reductase (RNR), probably by providing electrons for reduction during radical cofactor maturation in the catalytic small subunit rnr2. The polypeptide is Fe-S cluster assembly protein dre2 (Neurospora crassa (strain ATCC 24698 / 74-OR23-1A / CBS 708.71 / DSM 1257 / FGSC 987)).